Reading from the N-terminus, the 574-residue chain is Proline--tRNA ligase (574 aa).

It belongs to the class-II aminoacyl-tRNA synthetase family. ProS type 1 subfamily. In terms of assembly, homodimer.

The protein resides in the cytoplasm. It carries out the reaction tRNA(Pro) + L-proline + ATP = L-prolyl-tRNA(Pro) + AMP + diphosphate. Catalyzes the attachment of proline to tRNA(Pro) in a two-step reaction: proline is first activated by ATP to form Pro-AMP and then transferred to the acceptor end of tRNA(Pro). As ProRS can inadvertently accommodate and process non-cognate amino acids such as alanine and cysteine, to avoid such errors it has two additional distinct editing activities against alanine. One activity is designated as 'pretransfer' editing and involves the tRNA(Pro)-independent hydrolysis of activated Ala-AMP. The other activity is designated 'posttransfer' editing and involves deacylation of mischarged Ala-tRNA(Pro). The misacylated Cys-tRNA(Pro) is not edited by ProRS. In Marinomonas sp. (strain MWYL1), this protein is Proline--tRNA ligase.